Reading from the N-terminus, the 126-residue chain is Large ribosomal subunit protein bL12 (126 aa).

This sequence belongs to the bacterial ribosomal protein bL12 family. As to quaternary structure, homodimer. Part of the ribosomal stalk of the 50S ribosomal subunit. Forms a multimeric L10(L12)X complex, where L10 forms an elongated spine to which 2 to 4 L12 dimers bind in a sequential fashion. Binds GTP-bound translation factors.

Forms part of the ribosomal stalk which helps the ribosome interact with GTP-bound translation factors. Is thus essential for accurate translation. This chain is Large ribosomal subunit protein bL12, found in Trichlorobacter lovleyi (strain ATCC BAA-1151 / DSM 17278 / SZ) (Geobacter lovleyi).